The following is a 233-amino-acid chain: Ribosome maturation protein SDO1 homolog (233 aa).

It belongs to the SDO1/SBDS family.

The protein is Ribosome maturation protein SDO1 homolog of Aeropyrum pernix (strain ATCC 700893 / DSM 11879 / JCM 9820 / NBRC 100138 / K1).